Reading from the N-terminus, the 240-residue chain is Mannosyl-D-glycerate transport/metabolism system repressor MngR (240 aa).

In terms of domain architecture, HTH gntR-type spans 4–72; the sequence is KPLYRQIADR…QGSGTYVKEE (69 aa). The H-T-H motif DNA-binding region spans 32–51; sequence ESALQTEFGVSRVTVRQALR.

In terms of biological role, represses mngA and mngB. Regulates its own expression. The protein is Mannosyl-D-glycerate transport/metabolism system repressor MngR (mngR) of Escherichia coli (strain K12).